The following is a 105-amino-acid chain: Cortistatin (105 aa).

Positions 1 to 18 (MPLSPGLLLLLLSGATAT) are cleaved as a signal peptide. The propeptide occupies 19–74 (AALPLEGGPTGRDSEHMQEAAGIRKSSLLTFLAWWFEWTSQASAGPLIGEEAREVA). Cysteine 93 and cysteine 104 are disulfide-bonded.

The protein belongs to the somatostatin family. As to expression, expressed in a subset of GABAergic cells in the cortex and hippocampus.

It localises to the secreted. Its function is as follows. Binds to all human somatostatin receptor (SSTR) subtypes. It also inhibits cAMP production induced by forskolin through SSTRs. The sequence is that of Cortistatin (CORT) from Homo sapiens (Human).